Here is a 179-residue protein sequence, read N- to C-terminus: Tetratricopeptide repeat protein 36 (179 aa).

TPR repeat units lie at residues 43-76 (SSQL…CPLN), 77-110 (PSAY…AGPK), and 115-148 (CQAY…GSSF).

It belongs to the TTC36 family.

The sequence is that of Tetratricopeptide repeat protein 36 from Caenorhabditis briggsae.